We begin with the raw amino-acid sequence, 211 residues long: Transcription factor ces-2 (211 aa).

The segment covering 83-101 (VSSRSSTVSSSHFSSPQRS) has biased composition (low complexity). 2 disordered regions span residues 83 to 152 (VSSR…HALE) and 184 to 211 (NSEVSCESNDSTETNDSNDSKSDSTIEV). The segment covering 111 to 152 (PEEKKDSAYFERRRKNNDAAKRSRDARRQKEEQIASKAHALE) has biased composition (basic and acidic residues). The bZIP domain occupies 116 to 179 (DSAYFERRRK…AQLRFLLFSK (64 aa)). The segment at 122–140 (RRRKNNDAAKRSRDARRQK) is basic motif. The tract at residues 144-172 (IASKAHALERENMQLRGKVSSLEQEAAQL) is leucine-zipper. The segment covering 190–200 (ESNDSTETNDS) has biased composition (low complexity). A compositionally biased stretch (basic and acidic residues) spans 201–211 (NDSKSDSTIEV).

The protein belongs to the bZIP family. In terms of assembly, interacts with NFIL3 transcription factor homolog atf-2.

It localises to the nucleus. Functionally, transcription factor. Required to activate programmed cell death in the sister cells of the serotoninergic neurosecretory motor (NSM) neurons. Negatively regulates the activity of ces-1 which in turn negatively regulates the activities of cell-killing genes. Binds to the DNA sequence 5'-RTTACGTAAY-3'. Involved in the development of the excretory duct cell, by positively modulating embryonic transcription of putative transcription factor lin-48, acting in concert with NFIL3 transcription factor homolog atf-2. Positively modulates expression of neuropeptide pigment dispersing factor homologs pdf-1 and pdf-2. The chain is Transcription factor ces-2 (ces-2) from Caenorhabditis elegans.